The chain runs to 254 residues: 3-deoxy-manno-octulosonate cytidylyltransferase (254 aa).

The protein belongs to the KdsB family.

Its subcellular location is the cytoplasm. It catalyses the reaction 3-deoxy-alpha-D-manno-oct-2-ulosonate + CTP = CMP-3-deoxy-beta-D-manno-octulosonate + diphosphate. Its pathway is nucleotide-sugar biosynthesis; CMP-3-deoxy-D-manno-octulosonate biosynthesis; CMP-3-deoxy-D-manno-octulosonate from 3-deoxy-D-manno-octulosonate and CTP: step 1/1. It participates in bacterial outer membrane biogenesis; lipopolysaccharide biosynthesis. Activates KDO (a required 8-carbon sugar) for incorporation into bacterial lipopolysaccharide in Gram-negative bacteria. The polypeptide is 3-deoxy-manno-octulosonate cytidylyltransferase (Pseudomonas aeruginosa (strain ATCC 15692 / DSM 22644 / CIP 104116 / JCM 14847 / LMG 12228 / 1C / PRS 101 / PAO1)).